Here is a 466-residue protein sequence, read N- to C-terminus: 3-isopropylmalate dehydratase large subunit (466 aa).

The [4Fe-4S] cluster site is built by C347, C407, and C410.

Belongs to the aconitase/IPM isomerase family. LeuC type 1 subfamily. In terms of assembly, heterodimer of LeuC and LeuD. [4Fe-4S] cluster is required as a cofactor.

The enzyme catalyses (2R,3S)-3-isopropylmalate = (2S)-2-isopropylmalate. The protein operates within amino-acid biosynthesis; L-leucine biosynthesis; L-leucine from 3-methyl-2-oxobutanoate: step 2/4. In terms of biological role, catalyzes the isomerization between 2-isopropylmalate and 3-isopropylmalate, via the formation of 2-isopropylmaleate. The polypeptide is 3-isopropylmalate dehydratase large subunit (Blochmanniella floridana).